The following is a 61-amino-acid chain: Small ribosomal subunit protein uS14B (61 aa).

Zn(2+) is bound by residues Cys24, Cys27, Cys40, and Cys43.

It belongs to the universal ribosomal protein uS14 family. Zinc-binding uS14 subfamily. As to quaternary structure, part of the 30S ribosomal subunit. Contacts proteins S3 and S10. Zn(2+) serves as cofactor.

Functionally, binds 16S rRNA, required for the assembly of 30S particles and may also be responsible for determining the conformation of the 16S rRNA at the A site. This is Small ribosomal subunit protein uS14B from Streptomyces avermitilis (strain ATCC 31267 / DSM 46492 / JCM 5070 / NBRC 14893 / NCIMB 12804 / NRRL 8165 / MA-4680).